The chain runs to 197 residues: Holliday junction branch migration complex subunit RuvA (197 aa).

A domain I region spans residues 1 to 63 (MYAYLKGIIT…EDAHLLYGFR (63 aa)). The domain II stretch occupies residues 64-142 (SEDEKKLFLS…VAGDDLPAKI (79 aa)). The tract at residues 143 to 147 (AVQAS) is flexible linker. The domain III stretch occupies residues 148–197 (AENQELEEAMEAMLALGYKATELKKIKKFFEGTTDTAENYIKSALKMLVK).

The protein belongs to the RuvA family. In terms of assembly, homotetramer. Forms an RuvA(8)-RuvB(12)-Holliday junction (HJ) complex. HJ DNA is sandwiched between 2 RuvA tetramers; dsDNA enters through RuvA and exits via RuvB. An RuvB hexamer assembles on each DNA strand where it exits the tetramer. Each RuvB hexamer is contacted by two RuvA subunits (via domain III) on 2 adjacent RuvB subunits; this complex drives branch migration. In the full resolvosome a probable DNA-RuvA(4)-RuvB(12)-RuvC(2) complex forms which resolves the HJ.

Its subcellular location is the cytoplasm. Its function is as follows. The RuvA-RuvB-RuvC complex processes Holliday junction (HJ) DNA during genetic recombination and DNA repair, while the RuvA-RuvB complex plays an important role in the rescue of blocked DNA replication forks via replication fork reversal (RFR). RuvA specifically binds to HJ cruciform DNA, conferring on it an open structure. The RuvB hexamer acts as an ATP-dependent pump, pulling dsDNA into and through the RuvAB complex. HJ branch migration allows RuvC to scan DNA until it finds its consensus sequence, where it cleaves and resolves the cruciform DNA. The protein is Holliday junction branch migration complex subunit RuvA of Streptococcus pneumoniae (strain Taiwan19F-14).